A 481-amino-acid chain; its full sequence is Small ribosomal subunit protein bS1 (481 aa).

4 S1 motif domains span residues Gly36–Lys105, Asp123–Arg188, Gly209–Lys277, and Gly294–Lys363. The interval Thr429–Asp467 is disordered. Residues Ala437–Ser456 are compositionally biased toward low complexity.

This sequence belongs to the bacterial ribosomal protein bS1 family.

Its function is as follows. Binds mRNA; thus facilitating recognition of the initiation point. It is needed to translate mRNA with a short Shine-Dalgarno (SD) purine-rich sequence. In Mycobacterium tuberculosis (strain CDC 1551 / Oshkosh), this protein is Small ribosomal subunit protein bS1 (rpsA).